Consider the following 258-residue polypeptide: MKGPLKIGLMDSGMGGLSVLKGILKYDAELEVVYYGDLKNSPYGEKETSEILELVRDVCKRLQEENVSAILLACNTATSAAAQTLRKEFSIPIFGMEPAIKPAILQNPGKKIALLATPVTQREKKLQRLKAELGAEELILPVSCPGLAGLVDKGEFDEAEKYLRPILKKLREENVENLVLGCTHYIFLKHIILKNFPNVRIYDGNSGTIKHLLNSLQVRQRVSNRSSVSGSVYKLILNSDEELHFRLATELLQFENKF.

Substrate is bound by residues 11–12 (DS) and 43–44 (YG). C74 acts as the Proton donor/acceptor in catalysis. A substrate-binding site is contributed by 75–76 (NT). The active-site Proton donor/acceptor is the C182. 183-184 (TH) contacts substrate.

Belongs to the aspartate/glutamate racemases family.

It catalyses the reaction L-glutamate = D-glutamate. Its pathway is cell wall biogenesis; peptidoglycan biosynthesis. Its function is as follows. Provides the (R)-glutamate required for cell wall biosynthesis. The protein is Glutamate racemase of Leptospira borgpetersenii serovar Hardjo-bovis (strain JB197).